The sequence spans 123 residues: Large ribosomal subunit protein bL12 (123 aa).

Belongs to the bacterial ribosomal protein bL12 family. Homodimer. Part of the ribosomal stalk of the 50S ribosomal subunit. Forms a multimeric L10(L12)X complex, where L10 forms an elongated spine to which 2 to 4 L12 dimers bind in a sequential fashion. Binds GTP-bound translation factors.

In terms of biological role, forms part of the ribosomal stalk which helps the ribosome interact with GTP-bound translation factors. Is thus essential for accurate translation. The polypeptide is Large ribosomal subunit protein bL12 (Mycoplasmopsis synoviae (strain 53) (Mycoplasma synoviae)).